The chain runs to 351 residues: Cytoplasmic dynein 2 light intermediate chain 1 (351 aa).

The segment at 304–335 (TLKAIQDPARDPQYAESEVDEMRVQKDQELEQ) is disordered. Positions 323-335 (DEMRVQKDQELEQ) are enriched in basic and acidic residues.

It belongs to the dynein light intermediate chain family. As to quaternary structure, light intermediate chain of the cytoplasmic dynein complex 2, a multisubunit complex composed at least of eleven different proteins. The cytoplasmic dynein 2 complex consists of two catalytic heavy chains (HCs) and a number of non-catalytic subunits presented by intermediate chains (ICs), light intermediate chains (LICs) and light chains (LCs). Among them, a heavy chain (DYNC2H1), two intermediate chains (DYNC2I2 and DYNC2I1), a light intermediate chain (DYNC2LI1), and a light chain (DYNLT2B) are unique to the dynein-2 complex, but a subset of light chains are also shared by dynein-1 and dynein-2 complexes. Dynein-2 complex is built around two copies of cytoplasmic dynein 2 heavy chain 1 (DYNC2H1). The C-terminal region forms the motor domain, which converts the energy from ATP hydrolysis into movement. Its N-terminal region forms the tail, an extended structure that binds the other subunits and holds the two heavy chains in a homodimer. Interacts with DYNC2H1 (via N-terminus); this interaction stabilizes the dynein-2 complex structure.

The protein localises to the cytoplasm. Its subcellular location is the cell projection. The protein resides in the cilium. It localises to the cytoskeleton. It is found in the cilium basal body. The protein localises to the cilium axoneme. Its subcellular location is the microtubule organizing center. The protein resides in the centrosome. Functionally, acts as one of several non-catalytic accessory components of the cytoplasmic dynein 2 complex (dynein-2 complex), a motor protein complex that drives the movement of cargos along microtubules within cilia and flagella in concert with the intraflagellar transport (IFT) system, facilitating the assembly of these organelles. Involved in the regulation of ciliary length. In Rattus norvegicus (Rat), this protein is Cytoplasmic dynein 2 light intermediate chain 1 (Dync2li1).